The primary structure comprises 513 residues: Sphingolipid C9-methyltransferase 1 (513 aa).

The next 2 membrane-spanning stretches (helical) occupy residues 63–83 (FLVA…GGGL) and 85–105 (TAIF…WTVM). Residues 228–229 (YT), 265–273 (LLDIGCGWG), 291–296 (TLARNQ), and 321–322 (YR) contribute to the S-adenosyl-L-methionine site.

Belongs to the CFA/CMAS family.

The protein resides in the membrane. It catalyses the reaction a (4E,8E)-4-sphinga-4,8-dienine ceramide + S-adenosyl-L-methionine = a 9-methyl-(4E,8E)-sphinga-4,8-dienine ceramide + S-adenosyl-L-homocysteine + H(+). It functions in the pathway lipid metabolism; sphingolipid metabolism. Its function is as follows. Catalyzes methylation of the sphingoid base component of glucosylceramides (GluCers) at the C9-position. Sphingolipid C9-methylation requires 4,8-desaturated ceramides as substrates. Glucosylceramides play important roles in the growth, differentiation and pathogenicity. The methyl group at the C9-position distinguishes fungal glucosylceramides from those of plants and animals, and may thus play a role in host-pathogen interactions enabling the host to recognize the fungal attack and initiate specific defense responses. However, C-9 methylation of GlcCers is not essential for the sensitivity of F.graminearum to plant defensins MsDef1 and RsAFP2. In Gibberella zeae (strain ATCC MYA-4620 / CBS 123657 / FGSC 9075 / NRRL 31084 / PH-1) (Wheat head blight fungus), this protein is Sphingolipid C9-methyltransferase 1.